Here is a 483-residue protein sequence, read N- to C-terminus: MSHNQFDKKSQAWSALFSEPMSDLVKRYTASVFFDKRLWQADIAGSLAHADMLAAQKIISSEDHNAIQSGMATISAEIESGAFDWKLELEDVHLNIEARLTQLIGLAGKRLHTGRSRNDQVATDVRLWLRGEIDLIGALLTDLQKALLEVAEKNVEVILPGFTHLQVAQPISFGHHMLAYVEMFSRDAERMSEVRRRTNRLPLGAAALAGTSYPLDRERVAVSLGMVDEKGHPCVCQNSLDAVSDRDFAIEFTAAASLCMVHISRMSEELILWMSQNFGFIKIADRFTTGSSIMPQKKNPDVPELARGKTGRVVGHLMGLITLMKGQPLAYNKDNQEDKEPLFDTVDTLKDTLRIFAEMIGGQLNPATGIKEGGISVNPQAMEQAALKGYATATDLADYLVKKGLPFRDAHETVAHAVKAAITHQVDLSELPLAVLQQFNPGIEKDVYEVLSLRGSLNARDILGGTAPNQVRAQIARHRARLG.

It belongs to the lyase 1 family. Argininosuccinate lyase subfamily.

The protein localises to the cytoplasm. The catalysed reaction is 2-(N(omega)-L-arginino)succinate = fumarate + L-arginine. Its pathway is amino-acid biosynthesis; L-arginine biosynthesis; L-arginine from L-ornithine and carbamoyl phosphate: step 3/3. The polypeptide is Argininosuccinate lyase (Albidiferax ferrireducens (strain ATCC BAA-621 / DSM 15236 / T118) (Rhodoferax ferrireducens)).